We begin with the raw amino-acid sequence, 484 residues long: 1,3-beta-glucanosyltransferase GAS5 (484 aa).

Residues Met1–Ala19 form the signal peptide. Asn24 and Asn60 each carry an N-linked (GlcNAc...) asparagine glycan. A disulfide bond links Cys71 and Cys100. Residues Tyr89, Asn159, and Glu160 each coordinate (1,3-beta-D-glucosyl)n. Glu160 (proton donor) is an active-site residue. A glycan (N-linked (GlcNAc...) asparagine) is linked at Asn166. (1,3-beta-D-glucosyl)n-binding residues include Asp201 and Arg206. 2 disulfides stabilise this stretch: Cys215–Cys348 and Cys234–Cys265. Glu262 functions as the Nucleophile in the catalytic mechanism. Tyr295 is a binding site for (1,3-beta-D-glucosyl)n. N-linked (GlcNAc...) asparagine glycosylation is found at Asn299, Asn344, and Asn359. Residues Thr383–Gly462 form a disordered region. The span at Lys394 to Thr404 shows a compositional bias: acidic residues. Residues Ser405–Gly462 are compositionally biased toward low complexity. Gly462 carries the GPI-anchor amidated glycine lipid modification. Positions Ala463–Leu484 are cleaved as a propeptide — removed in mature form.

Belongs to the glycosyl hydrolase 72 family. In terms of processing, the GPI-anchor is attached to the protein in the endoplasmic reticulum and serves to target the protein to the cell surface. There, the glucosamine-inositol phospholipid moiety is cleaved off and the GPI-modified mannoprotein is covalently attached via its lipidless GPI glycan remnant to the 1,6-beta-glucan of the outer cell wall layer.

Its subcellular location is the secreted. The protein resides in the cell wall. It is found in the membrane. Splits internally a 1,3-beta-glucan molecule and transfers the newly generated reducing end (the donor) to the non-reducing end of another 1,3-beta-glucan molecule (the acceptor) forming a 1,3-beta linkage, resulting in the elongation of 1,3-beta-glucan chains in the cell wall. Involved in cell wall biosynthesis and morphogenesis. In Saccharomyces cerevisiae (strain ATCC 204508 / S288c) (Baker's yeast), this protein is 1,3-beta-glucanosyltransferase GAS5 (GAS5).